Here is an 80-residue protein sequence, read N- to C-terminus: Consomatin Mrc1 (80 aa).

The N-terminal stretch at 1 to 22 (MQTAYWVMVMMMVWITAPLSEG) is a signal peptide. Positions 23-57 (GKLNDVIRGLVPDDVTPQLILRSLISRRPSDSVVR) are excised as a propeptide. Cys63 and Cys68 are disulfide-bonded. The residue at position 65 (Trp65) is a D-tryptophan. Pro69, Pro70, Pro71, and Pro72 each carry 4-hydroxyproline. The propeptide occupies 74-80 (RRPNGKG).

The protein belongs to the conotoxin C superfamily. Consomatin family. Expressed by the venom duct.

It localises to the secreted. In terms of biological role, moderately activates human somatostatin receptors (SSTR) with a preferential activation of SSTR1 and SSTR4. In vivo, does not cause behavioral changes in mice within a few minutes of intracranial injection, but causes a progressive loss of movement thereafter. Four to five hours after injection, mice recover, even with the highest dose tested. Shows antinociception and antihyperalgesia activities in two mouse models of acute pain, most probably by acting outside the central nervous system. This is Consomatin Mrc1 from Conus mercator (Trader cone).